A 218-amino-acid chain; its full sequence is Mediator of RNA polymerase II transcription subunit 20 (218 aa).

Belongs to the Mediator complex subunit 20 family. As to quaternary structure, component of the Mediator complex.

The protein localises to the nucleus. Component of the Mediator complex, a coactivator involved in the regulated transcription of nearly all RNA polymerase II-dependent genes. Mediator functions as a bridge to convey information from gene-specific regulatory proteins to the basal RNA polymerase II transcription machinery. Mediator is recruited to promoters by direct interactions with regulatory proteins and serves as a scaffold for the assembly of a functional preinitiation complex with RNA polymerase II and the general transcription factors. This is Mediator of RNA polymerase II transcription subunit 20 (SRB2) from Yarrowia lipolytica (strain CLIB 122 / E 150) (Yeast).